A 322-amino-acid chain; its full sequence is Ribonuclease Z (322 aa).

Zn(2+) is bound by residues His62, His64, Asp66, His67, His143, Asp215, and His273. Asp66 (proton acceptor) is an active-site residue. Positions 300-314 (ELRRYELDPREKEPD) are enriched in basic and acidic residues. The disordered stretch occupies residues 300 to 322 (ELRRYELDPREKEPDPVGPADES).

This sequence belongs to the RNase Z family. In terms of assembly, homodimer. It depends on Zn(2+) as a cofactor.

It carries out the reaction Endonucleolytic cleavage of RNA, removing extra 3' nucleotides from tRNA precursor, generating 3' termini of tRNAs. A 3'-hydroxy group is left at the tRNA terminus and a 5'-phosphoryl group is left at the trailer molecule.. Its function is as follows. Zinc phosphodiesterase, which displays some tRNA 3'-processing endonuclease activity. Probably involved in tRNA maturation, by removing a 3'-trailer from precursor tRNA. The chain is Ribonuclease Z from Salinibacter ruber (strain DSM 13855 / M31).